We begin with the raw amino-acid sequence, 695 residues long: NADPH--cytochrome P450 reductase (695 aa).

The Lumenal portion of the chain corresponds to 1–8 (MAQLDTLD). The chain crosses the membrane as a helical span at residues 9-31 (LVVLVVLLVGSAAYFTKGTYWAV). Residues 32 to 695 (PKDPYAASGP…SGSYQEDVWS (664 aa)) are Cytoplasmic-facing. Positions 66–221 (CVIFYGSQTG…DFLAWKEPMW (156 aa)) constitute a Flavodoxin-like domain. Residues 72 to 77 (SQTGTA), 123 to 126 (ATYG), 169 to 178 (LGNNTYEHYQ), and Asp-204 each bind FMN. Positions 277–538 (HNPFIAPIVE…HVRHSNFKLP (262 aa)) constitute an FAD-binding FR-type domain. Arg-296 lines the NADP(+) pocket. Residues 451–454 (RYYS), 469–471 (TAV), and 486–489 (GVTT) each bind FAD. Residues Thr-552, 614-615 (SR), 620-624 (KVYVQ), and Glu-656 each bind NADP(+). FAD is bound at residue Trp-694.

It belongs to the NADPH--cytochrome P450 reductase family. In the N-terminal section; belongs to the flavodoxin family. The protein in the C-terminal section; belongs to the flavoprotein pyridine nucleotide cytochrome reductase family. The cofactor is FAD. FMN serves as cofactor.

It localises to the endoplasmic reticulum membrane. The protein localises to the mitochondrion outer membrane. It is found in the cell membrane. It carries out the reaction 2 oxidized [cytochrome P450] + NADPH = 2 reduced [cytochrome P450] + NADP(+) + H(+). Its function is as follows. This enzyme is required for electron transfer from NADP to cytochrome P450 in microsomes. It can also provide electron transfer to heme oxygenase and cytochrome B5. Involved in ergosterol biosynthesis. The sequence is that of NADPH--cytochrome P450 reductase from Aspergillus terreus (strain NIH 2624 / FGSC A1156).